The chain runs to 584 residues: UBX domain-containing protein 2 (584 aa).

Over 1-80 (MPVVNHEDSE…PTQTSTPMAE (80 aa)) the chain is Cytoplasmic. The helical transmembrane segment at 81–101 (TLVPPALGPRPLLFTASLPVV) threads the bilayer. The Lumenal portion of the chain corresponds to 102 to 151 (RPLPANFRNDFRTIGLNGRSNTVWSMFESFSYDGNPFLFILLLIPRIINR). A helical membrane pass occupies residues 152–172 (LSATIFTFFCTLLSLHSISGG). Residues 173-584 (GNSGKPKISK…DEEDEENEEQ (412 aa)) lie on the Cytoplasmic side of the membrane. The UBX domain occupies 426 to 570 (ETTGKQATLQ…WPNGSLLVEA (145 aa)).

As to quaternary structure, component of the DOA10 ubiquitin ligase complex which contains E3 ligase SSM4/DOA10 and CDC48-binding protein UBX2/SEL1. Component of the HRD1 ubiquitin ligase complex which contains the E3 ligase HRD1, its cofactors HRD3, USA1 and DER1, substrate recruiting factor YOS9 and UBX2. In ERAD-L, HRD3 and YOS9 jointly bind misfolded glycoproteins in the endoplasmic reticulum (ER) lumen. Movement of ERAD-L substrates through the ER membrane is facilitated by HRD1 and DER1 which have lateral gates facing each other and which distort the membrane region between the lateral gates, making it much thinner than a normal phospholipid bilayer. Substrates insert into the membrane as a hairpin loop with one strand interacting with DER1 and the other with HRD1. Both the DOA10 and HRD1 ubiquitin ligase complexes interact with the heterotrimeric CDC48-NPL4-UFD1 ATPase complex which is recruited by UBX2 via its interaction with CDC48 and which moves ubiquitinated substrates to the cytosol for targeting to the proteasome.

The protein localises to the endoplasmic reticulum membrane. In terms of biological role, integral endoplasmic reticulum membrane protein that coordinates the assembly of the ER-associated protein degradation (ERAD) machinery at the ER membrane. Mediates binding of CDC48 to the E3 ubiquitin ligases SSM4/DOA10 and HRD1, and to ERAD substrates. Component of the DOA10 ubiquitin ligase complex, which is part of the ERAD-C pathway responsible for the rapid degradation of membrane proteins with misfolded cytoplasmic domains. ERAD-C substrates are ubiquitinated through DOA10 in conjunction with the E2 ubiquitin-conjugating enzymes UBC6 and UBC7-CUE1. Also a component of the HRD1 ubiquitin ligase complex, which is part of the ERAD-L and ERAD-M pathways responsible for the rapid degradation of soluble lumenal and membrane proteins with misfolded lumenal domains (ERAD-L), or ER-membrane proteins with misfolded transmembrane domains (ERAD-M). ERAD-L substrates are ubiquitinated through HRD1 in conjunction with the E2 ubiquitin-conjugating enzymes UBC1 and UBC7-CUE1. Ubiquitinated substrates are then removed to the cytosol via the action of the CDC48-NPL4-UFD1 ATPase complex and targeted to the proteasome. This is UBX domain-containing protein 2 (UBX2) from Saccharomyces cerevisiae (strain ATCC 204508 / S288c) (Baker's yeast).